The primary structure comprises 64 residues: Large ribosomal subunit protein uL30 (64 aa).

It belongs to the universal ribosomal protein uL30 family. As to quaternary structure, part of the 50S ribosomal subunit.

In Desulforudis audaxviator (strain MP104C), this protein is Large ribosomal subunit protein uL30.